The chain runs to 103 residues: Putative membrane protein insertion efficiency factor (103 aa).

It belongs to the UPF0161 family.

It is found in the cell inner membrane. In terms of biological role, could be involved in insertion of integral membrane proteins into the membrane. The protein is Putative membrane protein insertion efficiency factor of Chlamydia abortus (strain DSM 27085 / S26/3) (Chlamydophila abortus).